Reading from the N-terminus, the 564-residue chain is Isopullulanase (564 aa).

Positions 1-19 (MRSTGYLLTLSAAFQVAQA) are cleaved as a signal peptide. N-linked (GlcNAc...) asparagine glycans are attached at residues Asn-24, Asn-94, Asn-115, Asn-138, Asn-186, Asn-210, Asn-305, Asn-381, Asn-448, Asn-455, Asn-460, Asn-486, Asn-491, Asn-503, and Asn-535.

N-glycosylated.

It is found in the secreted. The catalysed reaction is Hydrolysis of pullulan to isopanose (6-alpha-maltosylglucose).. Functionally, hydrolyzes pullulan, a linear polymer which is composed of maltotriose units with alpha-1,6 glucosidic linkages, to produce isopanose (Glca1-4Glca1-6Glc). This chain is Isopullulanase (ipuA), found in Aspergillus niger.